We begin with the raw amino-acid sequence, 240 residues long: Protein OXIDATIVE STRESS 3 LIKE 4 (240 aa).

A disordered region spans residues Met-1–Ile-128. Over residues Trp-51–Gly-66 the composition is skewed to polar residues. Over residues Asp-70 to Asp-84 the composition is skewed to acidic residues. The Nuclear localization signal motif lies at Asn-142–Cys-150. The disordered stretch occupies residues Asn-163–Val-207. Acidic residues predominate over residues Asn-173–Asp-187. The span at Leu-188–Lys-205 shows a compositional bias: basic and acidic residues. The tract at residues Glu-202–Asp-229 is kinase-inducible domain (KID). Ser-213 carries the post-translational modification Phosphoserine.

In terms of assembly, interacts with HDA19; Ser-213 is critical for this interaction.

The protein localises to the nucleus. Transcription activator which may regulates gene expression through interaction with the histone deacetylase HDA19. Promotes slightly the tolerance to cadmium (Cd) and to oxidizing chemicals (e.g. diamide and tert-butyl hydroperoxide (t-BOOH)). The chain is Protein OXIDATIVE STRESS 3 LIKE 4 from Arabidopsis thaliana (Mouse-ear cress).